The following is a 241-amino-acid chain: Lactate utilization protein C (241 aa).

This sequence belongs to the LutC/YkgG family.

Its function is as follows. Is involved in L-lactate degradation and allows cells to grow with lactate as the sole carbon source. The sequence is that of Lactate utilization protein C from Bacillus velezensis (strain DSM 23117 / BGSC 10A6 / LMG 26770 / FZB42) (Bacillus amyloliquefaciens subsp. plantarum).